The sequence spans 441 residues: Ribosomal protein uS12 methylthiotransferase RimO (441 aa).

The MTTase N-terminal domain occupies 7 to 117; that stretch reads PKVSFVSLGC…VLDAVHRALP (111 aa). Cys16, Cys52, Cys81, Cys148, Cys152, and Cys155 together coordinate [4Fe-4S] cluster. In terms of domain architecture, Radical SAM core spans 134–371; it reads LTPRHYAYLK…MARQQKISAR (238 aa). Residues 374-440 enclose the TRAM domain; the sequence is KRKVGTRQQV…AYDLHGSVAG (67 aa).

It belongs to the methylthiotransferase family. RimO subfamily. It depends on [4Fe-4S] cluster as a cofactor.

The protein localises to the cytoplasm. It carries out the reaction L-aspartate(89)-[ribosomal protein uS12]-hydrogen + (sulfur carrier)-SH + AH2 + 2 S-adenosyl-L-methionine = 3-methylsulfanyl-L-aspartate(89)-[ribosomal protein uS12]-hydrogen + (sulfur carrier)-H + 5'-deoxyadenosine + L-methionine + A + S-adenosyl-L-homocysteine + 2 H(+). In terms of biological role, catalyzes the methylthiolation of an aspartic acid residue of ribosomal protein uS12. The protein is Ribosomal protein uS12 methylthiotransferase RimO of Rhodopseudomonas palustris (strain BisB18).